Here is a 310-residue protein sequence, read N- to C-terminus: Acetaldehyde dehydrogenase 1 (310 aa).

12–15 (SGNI) serves as a coordination point for NAD(+). Cys-127 functions as the Acyl-thioester intermediate in the catalytic mechanism. Residues 163-171 (SAGPGTRAN) and Asn-282 each bind NAD(+).

It belongs to the acetaldehyde dehydrogenase family.

The enzyme catalyses acetaldehyde + NAD(+) + CoA = acetyl-CoA + NADH + H(+). This is Acetaldehyde dehydrogenase 1 from Mycobacterium sp. (strain KMS).